A 45-amino-acid polypeptide reads, in one-letter code: Large ribosomal subunit protein bL34 (45 aa).

Belongs to the bacterial ribosomal protein bL34 family.

The chain is Large ribosomal subunit protein bL34 from Opitutus terrae (strain DSM 11246 / JCM 15787 / PB90-1).